We begin with the raw amino-acid sequence, 501 residues long: Ribulose bisphosphate carboxylase large chain (501 aa).

Substrate contacts are provided by Asn-141 and Thr-191. Residue Lys-193 is the Proton acceptor of the active site. Substrate is bound at residue Lys-195. Residues Lys-219, Asp-221, and Glu-222 each coordinate Mg(2+). At Lys-219 the chain carries N6-carboxylysine. His-311 (proton acceptor) is an active-site residue. Substrate-binding residues include Arg-312, His-344, and Ser-396.

This sequence belongs to the RuBisCO large chain family. Type I subfamily. Heterohexadecamer of 8 large chains and 8 small chains. It depends on Mg(2+) as a cofactor.

It carries out the reaction 2 (2R)-3-phosphoglycerate + 2 H(+) = D-ribulose 1,5-bisphosphate + CO2 + H2O. The enzyme catalyses D-ribulose 1,5-bisphosphate + O2 = 2-phosphoglycolate + (2R)-3-phosphoglycerate + 2 H(+). In terms of biological role, ruBisCO catalyzes two reactions: the carboxylation of D-ribulose 1,5-bisphosphate, the primary event in carbon dioxide fixation, as well as the oxidative fragmentation of the pentose substrate. Both reactions occur simultaneously and in competition at the same active site. The sequence is that of Ribulose bisphosphate carboxylase large chain from Paraburkholderia phymatum (strain DSM 17167 / CIP 108236 / LMG 21445 / STM815) (Burkholderia phymatum).